Reading from the N-terminus, the 367-residue chain is UDP-N-acetylglucosamine--N-acetylmuramyl-(pentapeptide) pyrophosphoryl-undecaprenol N-acetylglucosamine transferase (367 aa).

UDP-N-acetyl-alpha-D-glucosamine is bound by residues 15-17 (TGG), Asn127, Arg163, Ser191, Ile249, and Gln294.

It belongs to the glycosyltransferase 28 family. MurG subfamily.

Its subcellular location is the cell inner membrane. It catalyses the reaction di-trans,octa-cis-undecaprenyl diphospho-N-acetyl-alpha-D-muramoyl-L-alanyl-D-glutamyl-meso-2,6-diaminopimeloyl-D-alanyl-D-alanine + UDP-N-acetyl-alpha-D-glucosamine = di-trans,octa-cis-undecaprenyl diphospho-[N-acetyl-alpha-D-glucosaminyl-(1-&gt;4)]-N-acetyl-alpha-D-muramoyl-L-alanyl-D-glutamyl-meso-2,6-diaminopimeloyl-D-alanyl-D-alanine + UDP + H(+). The protein operates within cell wall biogenesis; peptidoglycan biosynthesis. In terms of biological role, cell wall formation. Catalyzes the transfer of a GlcNAc subunit on undecaprenyl-pyrophosphoryl-MurNAc-pentapeptide (lipid intermediate I) to form undecaprenyl-pyrophosphoryl-MurNAc-(pentapeptide)GlcNAc (lipid intermediate II). In Burkholderia pseudomallei (strain 1106a), this protein is UDP-N-acetylglucosamine--N-acetylmuramyl-(pentapeptide) pyrophosphoryl-undecaprenol N-acetylglucosamine transferase.